Here is an 87-residue protein sequence, read N- to C-terminus: Small ribosomal subunit protein bS20 (87 aa).

The protein belongs to the bacterial ribosomal protein bS20 family.

Its function is as follows. Binds directly to 16S ribosomal RNA. This Clostridium beijerinckii (strain ATCC 51743 / NCIMB 8052) (Clostridium acetobutylicum) protein is Small ribosomal subunit protein bS20.